A 350-amino-acid chain; its full sequence is Pleckstrin (350 aa).

In terms of domain architecture, PH 1 spans 4 to 101; that stretch reads KRIREGYLVK…WVRDIKKAIK (98 aa). K64 carries the post-translational modification N6-acetyllysine. Residues S113 and S117 each carry the phosphoserine modification. The DEP domain occupies 136 to 221; it reads PEKGIKELNL…SPDAFYYFPD (86 aa). Residues 244 to 347 enclose the PH 2 domain; that stretch reads VIIKQGCLLK…WIKAIQVASR (104 aa).

Major protein kinase C substrate of platelets. In Mus musculus (Mouse), this protein is Pleckstrin (Plek).